An 89-amino-acid chain; its full sequence is Small ribosomal subunit protein uS14 (89 aa).

This sequence belongs to the universal ribosomal protein uS14 family. In terms of assembly, part of the 30S ribosomal subunit. Contacts proteins S3 and S10.

Its function is as follows. Binds 16S rRNA, required for the assembly of 30S particles and may also be responsible for determining the conformation of the 16S rRNA at the A site. This is Small ribosomal subunit protein uS14 from Parabacteroides distasonis (strain ATCC 8503 / DSM 20701 / CIP 104284 / JCM 5825 / NCTC 11152).